Reading from the N-terminus, the 421-residue chain is Histidine--tRNA ligase (421 aa).

This sequence belongs to the class-II aminoacyl-tRNA synthetase family. As to quaternary structure, homodimer.

It is found in the cytoplasm. The catalysed reaction is tRNA(His) + L-histidine + ATP = L-histidyl-tRNA(His) + AMP + diphosphate + H(+). This chain is Histidine--tRNA ligase, found in Thermus thermophilus (strain ATCC BAA-163 / DSM 7039 / HB27).